The sequence spans 645 residues: Glucans biosynthesis glucosyltransferase H (645 aa).

Positions 1–28 are disordered; it reads MDGTVTLSPAPTDLPPVSSLDAGQPTLP. 7 helical membrane passes run 64–84, 98–118, 423–443, 465–485, 504–524, 558–578, and 580–600; these read LIGG…SVLW, LFVL…AGFI, APMW…GAGI, AIWI…LGYI, ALSI…VMYL, SYGG…LVSP, and LAAW…VVAV.

It belongs to the glycosyltransferase 2 family. OpgH subfamily.

It localises to the cell inner membrane. It functions in the pathway glycan metabolism; osmoregulated periplasmic glucan (OPG) biosynthesis. Functionally, involved in the biosynthesis of osmoregulated periplasmic glucans (OPGs). In Xanthomonas campestris pv. campestris (strain B100), this protein is Glucans biosynthesis glucosyltransferase H.